The sequence spans 341 residues: Anthranilate phosphoribosyltransferase (341 aa).

Residues glycine 82, 85 to 86 (GD), threonine 90, 92 to 95 (NIST), 110 to 118 (KHGGRSVSS), and serine 122 contribute to the 5-phospho-alpha-D-ribose 1-diphosphate site. Glycine 82 contacts anthranilate. A Mg(2+)-binding site is contributed by serine 94. An anthranilate-binding site is contributed by arginine 168. Mg(2+) is bound by residues aspartate 227 and glutamate 228.

This sequence belongs to the anthranilate phosphoribosyltransferase family. As to quaternary structure, homodimer. The cofactor is Mg(2+).

It catalyses the reaction N-(5-phospho-beta-D-ribosyl)anthranilate + diphosphate = 5-phospho-alpha-D-ribose 1-diphosphate + anthranilate. It participates in amino-acid biosynthesis; L-tryptophan biosynthesis; L-tryptophan from chorismate: step 2/5. In terms of biological role, catalyzes the transfer of the phosphoribosyl group of 5-phosphorylribose-1-pyrophosphate (PRPP) to anthranilate to yield N-(5'-phosphoribosyl)-anthranilate (PRA). The chain is Anthranilate phosphoribosyltransferase from Nitrosomonas eutropha (strain DSM 101675 / C91 / Nm57).